The following is a 651-amino-acid chain: Histone-arginine methyltransferase CARM1 (651 aa).

The tract at residues 28–139 is interaction with C9orf72; sequence ATVSVFPGAR…GHTLERSVFS (112 aa). An SAM-dependent MTase PRMT-type domain is found at 147–454; it reads AVQYFQFYGY…KRQSYDISIV (308 aa). Positions 160, 169, 193, and 215 each coordinate S-adenosyl-L-methionine. At Ser217 the chain carries Phosphoserine. Lys228 is covalently cross-linked (Glycyl lysine isopeptide (Lys-Gly) (interchain with G-Cter in ubiquitin)). Residues Glu244 and Ser272 each coordinate S-adenosyl-L-methionine. The interval 347–380 is required for nuclear translocation; the sequence is RILMAKSVKYTVNFLEAKEGDLHRIEIPFKFHML. Positions 500–651 are transactivation domain; that stretch reads TGSTYNLSSG…IPTNTMHYGS (152 aa). Arg551 is modified (dimethylated arginine). The disordered stretch occupies residues 581 to 617; that stretch reads RSSYQWGPGRLRGHAGSSVPMTCPTGSSGAQGGGGSS.

It belongs to the class I-like SAM-binding methyltransferase superfamily. Protein arginine N-methyltransferase family. As to quaternary structure, homodimer. Interacts with NR1H4. Interacts with SNRPC. Interacts with the C-terminus of NCOA2/GRIP1, NCO3/ACTR and NCOA1/SRC1. Part of a complex consisting of CARM1, EP300/P300 and NCOA2/GRIP1. Interacts with FLII, TP53, myogenic factor MEF2, EP300/P300, TRIM24, CREBBP and CTNNB1. Interacts with RELA. Identified in a complex containing CARM1, TRIM24 and NCOA2/GRIP1. Interacts with NCOA3/SRC3. Interacts with SKP2. Interacts (via PH domain-like fold) with C9orf72. Interacts with PARP1; promoting PARP1 recruimtent to replication forks. In terms of processing, auto-methylated on Arg-551. Methylation enhances transcription coactivator activity. Methylation is required for its role in the regulation of pre-mRNA alternative splicing. Phosphorylation at Ser-217 interferes with S-adenosyl-L-methionine binding and strongly reduces methyltransferase activity. Phosphorylation at Ser-217 is strongly increased during mitosis, and decreases rapidly to a very low, basal level after entry into the G1 phase of the cell cycle. Phosphorylation at Ser-217 may promote location in the cytosol. Post-translationally, ubiquitinated by E3 ubiquitin-protein ligase complex containing FBXO9 at Lys-228; leading to proteasomal degradation. Isoform 1 is expressed at low levels in brain, liver and testis. In terms of tissue distribution, isoform 2 is highly expressed in brain, liver, skeletal muscle and testis. As to expression, isoform 3 is highly expressed in spleen, liver and kidney. Isoform 4 is expressed in spleen, liver and kidney.

It is found in the nucleus. The protein resides in the cytoplasm. Its subcellular location is the chromosome. The catalysed reaction is L-arginyl-[protein] + 2 S-adenosyl-L-methionine = N(omega),N(omega)-dimethyl-L-arginyl-[protein] + 2 S-adenosyl-L-homocysteine + 2 H(+). Methylation of H3R17 (H3R17me) by CARM1 is stimulated by preacetylation of H3 'Lys-18' (H3K18ac) H3 'Lys-23' (H3K23ac) by EP300 and blocked by citrullination of H3 'Arg-17' (H3R17ci) by PADI4. Its function is as follows. Methylates (mono- and asymmetric dimethylation) the guanidino nitrogens of arginyl residues in several proteins involved in DNA packaging, transcription regulation, pre-mRNA splicing, and mRNA stability. Recruited to promoters upon gene activation together with histone acetyltransferases from EP300/P300 and p160 families, methylates histone H3 at 'Arg-17' (H3R17me), forming mainly asymmetric dimethylarginine (H3R17me2a), leading to activation of transcription via chromatin remodeling. During nuclear hormone receptor activation and TCF7L2/TCF4 activation, acts synergically with EP300/P300 and either one of the p160 histone acetyltransferases NCOA1/SRC1, NCOA2/GRIP1 and NCOA3/ACTR or CTNNB1/beta-catenin to activate transcription. During myogenic transcriptional activation, acts together with NCOA3/ACTR as a coactivator for MEF2C. During monocyte inflammatory stimulation, acts together with EP300/P300 as a coactivator for NF-kappa-B. Acts as a coactivator for PPARG, promotes adipocyte differentiation and the accumulation of brown fat tissue. Plays a role in the regulation of pre-mRNA alternative splicing by methylation of splicing factors. Also seems to be involved in p53/TP53 transcriptional activation. Methylates EP300/P300, both at 'Arg-2142', which may loosen its interaction with NCOA2/GRIP1, and at 'Arg-580' and 'Arg-604' in the KIX domain, which impairs its interaction with CREB and inhibits CREB-dependent transcriptional activation. Also methylates arginine residues in RNA-binding proteins PABPC1, ELAVL1 and ELAV4, which may affect their mRNA-stabilizing properties and the half-life of their target mRNAs. Acts as a transcriptional coactivator of ACACA/acetyl-CoA carboxylase by enriching H3R17 methylation at its promoter, thereby positively regulating fatty acid synthesis. Independently of its methyltransferase activity, involved in replication fork progression: promotes PARP1 recruitment to replication forks, leading to poly-ADP-ribosylation of chromatin at replication forks and reduced fork speed. Functionally, isoform 3 specifically affects pre-mRNA splicing. This activity is independent from methyltransferase activity. The protein is Histone-arginine methyltransferase CARM1 (Carm1) of Rattus norvegicus (Rat).